Consider the following 223-residue polypeptide: Putative UPF0607 protein LOC392364 (223 aa).

Over residues 110-138 (KMEVRAEEPKEATEVKDQVETQEQEDNKR) the composition is skewed to basic and acidic residues. The interval 110 to 223 (KMEVRAEEPK…GRTPPARQHG (114 aa)) is disordered. 2 stretches are compositionally biased toward polar residues: residues 145-163 (EAAS…TSPR) and 174-186 (QLKS…QTDK).

Belongs to the UPF0607 family.

This Homo sapiens (Human) protein is Putative UPF0607 protein LOC392364.